The primary structure comprises 343 residues: GTP 3',8-cyclase (343 aa).

The Radical SAM core domain maps to 19–244 (PYGRTISYLR…TDVDDSTGGP (226 aa)). Arg-28 is a GTP binding site. Positions 35 and 39 each coordinate [4Fe-4S] cluster. Tyr-41 provides a ligand contact to S-adenosyl-L-methionine. Cys-42 contributes to the [4Fe-4S] cluster binding site. Arg-77 is a GTP binding site. Gly-81 contacts S-adenosyl-L-methionine. Thr-111 lines the GTP pocket. Residue Ser-135 coordinates S-adenosyl-L-methionine. Lys-171 contacts GTP. Met-205 contributes to the S-adenosyl-L-methionine binding site. Residues Cys-268 and Cys-271 each contribute to the [4Fe-4S] cluster site. GTP is bound at residue 273-275 (RVR). Cys-285 is a [4Fe-4S] cluster binding site.

The protein belongs to the radical SAM superfamily. MoaA family. In terms of assembly, monomer and homodimer. It depends on [4Fe-4S] cluster as a cofactor.

It carries out the reaction GTP + AH2 + S-adenosyl-L-methionine = (8S)-3',8-cyclo-7,8-dihydroguanosine 5'-triphosphate + 5'-deoxyadenosine + L-methionine + A + H(+). It participates in cofactor biosynthesis; molybdopterin biosynthesis. Catalyzes the cyclization of GTP to (8S)-3',8-cyclo-7,8-dihydroguanosine 5'-triphosphate. The protein is GTP 3',8-cyclase of Nitrobacter hamburgensis (strain DSM 10229 / NCIMB 13809 / X14).